Consider the following 519-residue polypeptide: Exodeoxyribonuclease 7 large subunit (519 aa).

A disordered region spans residues 500–519 (VGRGKTRKPKEEPPAQGSLL).

Belongs to the XseA family. As to quaternary structure, heterooligomer composed of large and small subunits.

The protein resides in the cytoplasm. The enzyme catalyses Exonucleolytic cleavage in either 5'- to 3'- or 3'- to 5'-direction to yield nucleoside 5'-phosphates.. In terms of biological role, bidirectionally degrades single-stranded DNA into large acid-insoluble oligonucleotides, which are then degraded further into small acid-soluble oligonucleotides. The protein is Exodeoxyribonuclease 7 large subunit of Cereibacter sphaeroides (strain KD131 / KCTC 12085) (Rhodobacter sphaeroides).